Consider the following 239-residue polypeptide: Purine nucleoside phosphorylase DeoD-type (239 aa).

Residue His5 coordinates a purine D-ribonucleoside. Phosphate-binding positions include Gly21, Arg25, Arg44, and 88 to 91; that span reads RVGS. Residues 180 to 182 and 204 to 205 contribute to the a purine D-ribonucleoside site; these read EME and SD. Asp205 functions as the Proton donor in the catalytic mechanism.

Belongs to the PNP/UDP phosphorylase family. In terms of assembly, homohexamer; trimer of homodimers.

The enzyme catalyses a purine D-ribonucleoside + phosphate = a purine nucleobase + alpha-D-ribose 1-phosphate. It catalyses the reaction a purine 2'-deoxy-D-ribonucleoside + phosphate = a purine nucleobase + 2-deoxy-alpha-D-ribose 1-phosphate. In terms of biological role, catalyzes the reversible phosphorolytic breakdown of the N-glycosidic bond in the beta-(deoxy)ribonucleoside molecules, with the formation of the corresponding free purine bases and pentose-1-phosphate. This is Purine nucleoside phosphorylase DeoD-type from Cronobacter sakazakii (strain ATCC BAA-894) (Enterobacter sakazakii).